We begin with the raw amino-acid sequence, 169 residues long: Disulfide bond formation protein B (169 aa).

Residues 1–13 (MSQLQQFCHNRFS) lie on the Cytoplasmic side of the membrane. The chain crosses the membrane as a helical span at residues 14–30 (WGLLLLSAIGLELAALF). The Periplasmic portion of the chain corresponds to 31 to 48 (FQYGMDLAPCVMCIYIRV). A disulfide bond links cysteine 40 and cysteine 43. A helical membrane pass occupies residues 49–64 (AVLGIILAALIGILQP). Residues 65–71 (KVWLLRL) lie on the Cytoplasmic side of the membrane. A helical transmembrane segment spans residues 72–89 (VGMAGWAVSAVWGFKLAY). Topologically, residues 90-144 (ELNQMQVNPSPFATCSFYPEFPSFMPLDTWLPSVFSPTGMCSDSPWSWLSVSMAQ) are periplasmic. Cysteines 104 and 130 form a disulfide. Residues 145–163 (WMMLGFAIYGVIWLLMLLP) form a helical membrane-spanning segment. At 164–169 (ALKSAK) the chain is on the cytoplasmic side.

The protein belongs to the DsbB family.

The protein resides in the cell inner membrane. In terms of biological role, required for disulfide bond formation in some periplasmic proteins. Acts by oxidizing the DsbA protein. This Shewanella frigidimarina (strain NCIMB 400) protein is Disulfide bond formation protein B.